A 307-amino-acid chain; its full sequence is UDP-N-acetylenolpyruvoylglucosamine reductase (307 aa).

One can recognise an FAD-binding PCMH-type domain in the interval 33–198 (KVGGPVDILV…LEAILKLSLG (166 aa)). R177 is a catalytic residue. The Proton donor role is filled by S227. E297 is a catalytic residue.

Belongs to the MurB family. Requires FAD as cofactor.

It is found in the cytoplasm. The enzyme catalyses UDP-N-acetyl-alpha-D-muramate + NADP(+) = UDP-N-acetyl-3-O-(1-carboxyvinyl)-alpha-D-glucosamine + NADPH + H(+). It functions in the pathway cell wall biogenesis; peptidoglycan biosynthesis. Cell wall formation. In Clostridium tetani (strain Massachusetts / E88), this protein is UDP-N-acetylenolpyruvoylglucosamine reductase.